A 428-amino-acid chain; its full sequence is Adenylosuccinate synthetase (428 aa).

GTP is bound by residues 11 to 17 (GDEGKGK) and 39 to 41 (GHT). Catalysis depends on D12, which acts as the Proton acceptor. D12 and G39 together coordinate Mg(2+). IMP is bound by residues 12–15 (DEGK), 37–40 (NAGH), T130, R144, N226, T241, and R305. H40 serves as the catalytic Proton donor. 301 to 307 (VTTGRKR) lines the substrate pocket. GTP is bound by residues R307, 333–335 (KLD), and 415–417 (GTG).

This sequence belongs to the adenylosuccinate synthetase family. In terms of assembly, homodimer. It depends on Mg(2+) as a cofactor.

The protein resides in the cytoplasm. The catalysed reaction is IMP + L-aspartate + GTP = N(6)-(1,2-dicarboxyethyl)-AMP + GDP + phosphate + 2 H(+). It functions in the pathway purine metabolism; AMP biosynthesis via de novo pathway; AMP from IMP: step 1/2. In terms of biological role, plays an important role in the de novo pathway and in the salvage pathway of purine nucleotide biosynthesis. Catalyzes the first committed step in the biosynthesis of AMP from IMP. The chain is Adenylosuccinate synthetase from Komagataella phaffii (strain GS115 / ATCC 20864) (Yeast).